We begin with the raw amino-acid sequence, 1112 residues long: Mediator of RNA polymerase II transcription subunit 14 (1112 aa).

Belongs to the Mediator complex subunit 14 family. As to quaternary structure, component of the Mediator complex.

The protein localises to the nucleus. Functionally, component of the Mediator complex, a coactivator involved in the regulated transcription of nearly all RNA polymerase II-dependent genes. Mediator functions as a bridge to convey information from gene-specific regulatory proteins to the basal RNA polymerase II transcription machinery. Mediator is recruited to promoters by direct interactions with regulatory proteins and serves as a scaffold for the assembly of a functional preinitiation complex with RNA polymerase II and the general transcription factors. This is Mediator of RNA polymerase II transcription subunit 14 (RGR1) from Scheffersomyces stipitis (strain ATCC 58785 / CBS 6054 / NBRC 10063 / NRRL Y-11545) (Yeast).